The sequence spans 483 residues: NADH-quinone oxidoreductase subunit N (483 aa).

The next 13 membrane-spanning stretches (helical) occupy residues 7 to 27 (AILT…LGAV), 33 to 53 (ALAS…AFYI), 76 to 96 (FAKI…QDYM), 108 to 128 (VLII…DLIA), 161 to 181 (FVLG…AYGF), 196 to 216 (GGDM…GLAF), 235 to 255 (PTPI…ALFA), 272 to 292 (IVAF…IGQT), 297 to 317 (LMAY…SAGT), 323 to 343 (AMLI…AFIL), 369 to 389 (ALAI…LGFF), 402 to 422 (GLVW…FYYI), and 442 to 462 (MGLV…LGWV).

This sequence belongs to the complex I subunit 2 family. As to quaternary structure, NDH-1 is composed of 14 different subunits. Subunits NuoA, H, J, K, L, M, N constitute the membrane sector of the complex.

It localises to the cell inner membrane. The catalysed reaction is a quinone + NADH + 5 H(+)(in) = a quinol + NAD(+) + 4 H(+)(out). NDH-1 shuttles electrons from NADH, via FMN and iron-sulfur (Fe-S) centers, to quinones in the respiratory chain. The immediate electron acceptor for the enzyme in this species is believed to be ubiquinone. Couples the redox reaction to proton translocation (for every two electrons transferred, four hydrogen ions are translocated across the cytoplasmic membrane), and thus conserves the redox energy in a proton gradient. The sequence is that of NADH-quinone oxidoreductase subunit N from Jannaschia sp. (strain CCS1).